The primary structure comprises 475 residues: MYPSNKKKKVWREEKERLLKMTLEERRKEYIRDYVSLSTILSWKEEMKSKGQNDEENTQEAPQMKKSLSEKVSLYRGDITLLEVDAIVNAANASLLGGGGVDGCIHRAAGPCLLAECRNLNGCETGHAKITCGYDLPAKYVIHTVGPIARGHINGSHKEDLANCYQSSLKLVKENNLRSVAFPCISTGIYGFPNEPAAVIALGTIKEWLAKNHQEVDRIIFCVFLEVDFKIYKKKMNEFFPVDDNNEGTDADMKEDSEGPEPKGLSPPHKKSKAKKPESSKDSSEDESGPEEKQTAEEMEGQSQEAGGLRFLLRNLLGLIHRDGVNTTPVPSPASEDKAEVHKDEDSAKDDNTVKDSDMTNHSVCDQELPNGQENDSAKSEGKTEAESPSSSMETEDLSPNQEDAAIVEQPEVIPLIDDQEAQEGGEAQGKDAPAVFAESQGSSEAENTSGPDVDMNSQVDGVNEPTESLQEDLQ.

In terms of domain architecture, Macro spans glutamine 59–phenylalanine 240. Substrate-binding positions include glycine 77–isoleucine 79, alanine 90–asparagine 92, and glycine 97–aspartate 102. Residue lysine 170 forms a Glycyl lysine isopeptide (Lys-Gly) (interchain with G-Cter in ubiquitin) linkage. Residues isoleucine 185 to glycine 191 and phenylalanine 224 contribute to the substrate site. 2 disordered regions span residues proline 241–alanine 306 and glycine 324–glutamine 475. 2 stretches are compositionally biased toward basic and acidic residues: residues alanine 251–glutamate 261 and serine 335–methionine 359. Positions threonine 360–asparagine 375 are enriched in polar residues. Basic and acidic residues predominate over residues aspartate 376–alanine 386. 2 stretches are compositionally biased toward polar residues: residues glutamate 387 to glutamine 402 and serine 440 to serine 469.

Belongs to the MacroD-type family. MacroD1/2-like subfamily. In terms of assembly, interacts with ADP-ribosylated PARP1. As to expression, expressed in the kidney.

It is found in the nucleus. The enzyme catalyses 2''-O-acetyl-ADP-D-ribose + H2O = ADP-D-ribose + acetate + H(+). It catalyses the reaction 4-O-(ADP-D-ribosyl)-L-aspartyl-[protein] + H2O = L-aspartyl-[protein] + ADP-D-ribose + H(+). It carries out the reaction 5-O-(ADP-D-ribosyl)-L-glutamyl-[protein] + H2O = L-glutamyl-[protein] + ADP-D-ribose + H(+). The catalysed reaction is alpha-NAD(+) + H2O = ADP-D-ribose + nicotinamide + H(+). Its activity is regulated as follows. Subject to product inhibition by ADP-ribose. Removes ADP-ribose from aspartate and glutamate residues in proteins bearing a single ADP-ribose moiety. Inactive towards proteins bearing poly-ADP-ribose. Deacetylates O-acetyl-ADP ribose, a signaling molecule generated by the deacetylation of acetylated lysine residues in histones and other proteins. The sequence is that of ADP-ribose glycohydrolase MACROD2 from Mus musculus (Mouse).